The chain runs to 440 residues: Trigger factor (440 aa).

The PPIase FKBP-type domain maps to 163-248 (NDTVSINFKG…INSIKEKVLP (86 aa)).

Belongs to the FKBP-type PPIase family. Tig subfamily.

Its subcellular location is the cytoplasm. The catalysed reaction is [protein]-peptidylproline (omega=180) = [protein]-peptidylproline (omega=0). Involved in protein export. Acts as a chaperone by maintaining the newly synthesized protein in an open conformation. Functions as a peptidyl-prolyl cis-trans isomerase. This is Trigger factor from Finegoldia magna (strain ATCC 29328 / DSM 20472 / WAL 2508) (Peptostreptococcus magnus).